The chain runs to 306 residues: Transcription initiation factor IIB 2 (306 aa).

The segment at 6–37 (PKRVCPICGSTEFIYDPRRGEIVCAKCGYVIE) adopts a TFIIB-type zinc-finger fold. 4 residues coordinate Zn(2+): Cys10, Cys13, Cys29, and Cys32. Repeat copies occupy residues 123–206 (SELD…ARGL) and 217–298 (EYVD…ELVE).

The protein belongs to the TFIIB family.

Functionally, stabilizes TBP binding to an archaeal box-A promoter. Also responsible for recruiting RNA polymerase II to the pre-initiation complex (DNA-TBP-TFIIB). The polypeptide is Transcription initiation factor IIB 2 (Thermococcus kodakarensis (strain ATCC BAA-918 / JCM 12380 / KOD1) (Pyrococcus kodakaraensis (strain KOD1))).